Here is a 289-residue protein sequence, read N- to C-terminus: Segregation and condensation protein A (289 aa).

The span at 1 to 18 (MSEDRRSPTDEAPREGEL) shows a compositional bias: basic and acidic residues. The tract at residues 1 to 24 (MSEDRRSPTDEAPREGELPRSPGD) is disordered.

This sequence belongs to the ScpA family. As to quaternary structure, component of the Structural Maintenance of Chromosome (SMC) condensin-like complex composed of ScpA, ScpB and the Smc homodimer. ScpA and ScpB bind to the head domain of Smc. The presence of the three proteins is required for the association of the complex with DNA.

It localises to the cytoplasm. In terms of biological role, a conditionally essential component of the chromosome segregation machinery. Participates in chromosomal partition during cell division. Important for positioning of ParB-parS complexes (ori of replication) and of the ter replication site, as well as for segration of the ParB-parS complex and thus chromosome segregation. May act via the formation of a condensin-like complex containing Smc, ScpA and ScpB that pulls DNA away from mid-cell into both cell halves. This Myxococcus xanthus (strain DK1622) protein is Segregation and condensation protein A.